The following is a 164-amino-acid chain: Ecotin (164 aa).

The first 20 residues, 1–20 (MKMFVPAVVFAALASASAWA), serve as a signal peptide directing secretion. A disulfide bridge links Cys-72 with Cys-109.

It belongs to the protease inhibitor I11 (ecotin) family. Homodimer.

The protein localises to the periplasm. General inhibitor of pancreatic serine proteases: inhibits chymotrypsin, trypsin, elastases, factor X, kallikrein as well as a variety of other proteases. This is Ecotin from Salmonella enteritidis PT4 (strain P125109).